A 184-amino-acid polypeptide reads, in one-letter code: Large ribosomal subunit protein uL5 (184 aa).

It belongs to the universal ribosomal protein uL5 family. Part of the 50S ribosomal subunit; part of the 5S rRNA/L5/L18/L25 subcomplex. Contacts the 5S rRNA and the P site tRNA. Forms a bridge to the 30S subunit in the 70S ribosome.

This is one of the proteins that bind and probably mediate the attachment of the 5S RNA into the large ribosomal subunit, where it forms part of the central protuberance. In the 70S ribosome it contacts protein S13 of the 30S subunit (bridge B1b), connecting the 2 subunits; this bridge is implicated in subunit movement. Contacts the P site tRNA; the 5S rRNA and some of its associated proteins might help stabilize positioning of ribosome-bound tRNAs. This is Large ribosomal subunit protein uL5 from Corynebacterium kroppenstedtii (strain DSM 44385 / JCM 11950 / CIP 105744 / CCUG 35717).